We begin with the raw amino-acid sequence, 100 residues long: C-X-C motif chemokine 2 (100 aa).

The N-terminal stretch at 1 to 31 is a signal peptide; the sequence is MAPPTRQLLNAVLVLLLLLATNHQGTGVVVA. 2 disulfides stabilise this stretch: Cys36-Cys62 and Cys38-Cys78.

The protein belongs to the intercrine alpha (chemokine CxC) family. Homotetramer. In terms of tissue distribution, at least expressed in the lung and trachea.

It localises to the secreted. In terms of biological role, chemotactic for human polymorphonuclear leukocytes but does not induce chemokinesis or an oxidative burst. Contributes to neutrophil activation during inflammation. In Rattus norvegicus (Rat), this protein is C-X-C motif chemokine 2 (Cxcl2).